We begin with the raw amino-acid sequence, 400 residues long: Forkhead box protein Q1 (400 aa).

The segment at 1 to 112 (MKLEVFVPRA…EGARSKPYTR (112 aa)) is disordered. Residues 32-54 (LSAAGDDSLGSDGDCAANSPAAG) are compositionally biased toward low complexity. 2 stretches are compositionally biased toward gly residues: residues 55 to 66 (SGAGDLEGGGGE) and 95 to 104 (CAGGVGGGEG). The segment at residues 115-210 (KPPYSYIALI…ADGVFRRRRK (96 aa)) is a DNA-binding region (fork-head). Positions 213-264 (SHRTTVSASGLRPEEAPPGPAGTPQPAPAARSSPIARSPARQEERSSPASKF) are disordered. A compositionally biased stretch (pro residues) spans 228-239 (APPGPAGTPQPA). Over residues 240 to 251 (PAARSSPIARSP) the composition is skewed to low complexity.

In terms of tissue distribution, expressed in kidney and stomach. Expression in the outer medulla of the kidney and the transitional epithelium. Expressed in the hair follicle medulla.

It localises to the nucleus. Its function is as follows. Plays a role in hair follicle differentiation. The polypeptide is Forkhead box protein Q1 (Foxq1) (Mus musculus (Mouse)).